Consider the following 398-residue polypeptide: GTP cyclohydrolase-2 (398 aa).

The unknown stretch occupies residues 1–172 (MNTPTHTHPH…TAAACASTTE (172 aa)). Residues 173 to 398 (YELVTRTPVP…VKPIAKTGHA (226 aa)) are GTP cyclohydrolase II. 220-224 (RVHSS) is a binding site for GTP. Zn(2+) is bound by residues Cys-225, Cys-236, and Cys-238. GTP contacts are provided by residues Gln-241, 263–265 (EGR), and Thr-285. Residue Asp-297 is the Proton acceptor of the active site. Arg-299 functions as the Nucleophile in the catalytic mechanism. Residues Ser-320 and Lys-325 each coordinate GTP. The disordered stretch occupies residues 375-398 (QRPQDPSETVDGETVKPIAKTGHA).

The protein in the C-terminal section; belongs to the GTP cyclohydrolase II family. Zn(2+) is required as a cofactor.

It catalyses the reaction GTP + 4 H2O = 2,5-diamino-6-hydroxy-4-(5-phosphoribosylamino)-pyrimidine + formate + 2 phosphate + 3 H(+). It functions in the pathway cofactor biosynthesis; riboflavin biosynthesis; 5-amino-6-(D-ribitylamino)uracil from GTP: step 1/4. Catalyzes the conversion of GTP to 2,5-diamino-6-ribosylamino-4(3H)-pyrimidinone 5'-phosphate (DARP), formate and pyrophosphate. This is GTP cyclohydrolase-2 (ribA) from Xylella fastidiosa (strain Temecula1 / ATCC 700964).